The primary structure comprises 245 residues: UDP-2,3-diacylglucosamine hydrolase (245 aa).

Residues aspartate 8, histidine 10, aspartate 41, asparagine 79, and histidine 114 each coordinate Mn(2+). Asparagine 79–arginine 80 serves as a coordination point for substrate. Residues aspartate 122, serine 160, asparagine 164, lysine 167, and histidine 195 each coordinate substrate. Positions 195 and 197 each coordinate Mn(2+).

The protein belongs to the LpxH family. Requires Mn(2+) as cofactor.

The protein localises to the cell inner membrane. It catalyses the reaction UDP-2-N,3-O-bis[(3R)-3-hydroxytetradecanoyl]-alpha-D-glucosamine + H2O = 2-N,3-O-bis[(3R)-3-hydroxytetradecanoyl]-alpha-D-glucosaminyl 1-phosphate + UMP + 2 H(+). Its pathway is glycolipid biosynthesis; lipid IV(A) biosynthesis; lipid IV(A) from (3R)-3-hydroxytetradecanoyl-[acyl-carrier-protein] and UDP-N-acetyl-alpha-D-glucosamine: step 4/6. Hydrolyzes the pyrophosphate bond of UDP-2,3-diacylglucosamine to yield 2,3-diacylglucosamine 1-phosphate (lipid X) and UMP by catalyzing the attack of water at the alpha-P atom. Involved in the biosynthesis of lipid A, a phosphorylated glycolipid that anchors the lipopolysaccharide to the outer membrane of the cell. This is UDP-2,3-diacylglucosamine hydrolase from Photobacterium profundum (strain SS9).